Consider the following 691-residue polypeptide: Ribonucleoprotein PTB-binding 2 (691 aa).

Residues 1–30 are compositionally biased toward gly residues; sequence MAAAAGDGGGEGGAGLGSAAGLGPGPGLRG. Residues 1-47 form a disordered region; sequence MAAAAGDGGGEGGAGLGSAAGLGPGPGLRGQGPSAEAHEGAPDPMPA. An N-acetylalanine modification is found at Ala2. RRM domains are found at residues 69–140, 142–220, and 231–309; these read RKIL…LQPT, ALLC…WMDV, and KCLC…FCAP. Disordered regions lie at residues 492–522 and 543–574; these read PNQH…EGNF and GHHK…GEPP. Polar residues predominate over residues 548–569; that stretch reads QQSQPKGTEISSGAASKNQTSL.

As to quaternary structure, interacts with PTBP1 and RAVER1.

The protein localises to the nucleus. It localises to the cytoplasm. Functionally, may bind single-stranded nucleic acids. The polypeptide is Ribonucleoprotein PTB-binding 2 (RAVER2) (Homo sapiens (Human)).